A 206-amino-acid polypeptide reads, in one-letter code: Ribosomal RNA small subunit methyltransferase G (206 aa).

Residues Gly74, Leu79, 125–126 (VE), and Arg140 contribute to the S-adenosyl-L-methionine site.

The protein belongs to the methyltransferase superfamily. RNA methyltransferase RsmG family.

It is found in the cytoplasm. It carries out the reaction guanosine(527) in 16S rRNA + S-adenosyl-L-methionine = N(7)-methylguanosine(527) in 16S rRNA + S-adenosyl-L-homocysteine. Its function is as follows. Specifically methylates the N7 position of guanine in position 527 of 16S rRNA. The chain is Ribosomal RNA small subunit methyltransferase G from Shewanella amazonensis (strain ATCC BAA-1098 / SB2B).